Reading from the N-terminus, the 367-residue chain is UDP-N-acetylglucosamine--N-acetylmuramyl-(pentapeptide) pyrophosphoryl-undecaprenol N-acetylglucosamine transferase (367 aa).

UDP-N-acetyl-alpha-D-glucosamine-binding positions include 21–23 (TGG), asparagine 129, arginine 170, serine 198, and glutamine 295.

It belongs to the glycosyltransferase 28 family. MurG subfamily.

Its subcellular location is the cell inner membrane. The catalysed reaction is di-trans,octa-cis-undecaprenyl diphospho-N-acetyl-alpha-D-muramoyl-L-alanyl-D-glutamyl-meso-2,6-diaminopimeloyl-D-alanyl-D-alanine + UDP-N-acetyl-alpha-D-glucosamine = di-trans,octa-cis-undecaprenyl diphospho-[N-acetyl-alpha-D-glucosaminyl-(1-&gt;4)]-N-acetyl-alpha-D-muramoyl-L-alanyl-D-glutamyl-meso-2,6-diaminopimeloyl-D-alanyl-D-alanine + UDP + H(+). It participates in cell wall biogenesis; peptidoglycan biosynthesis. Cell wall formation. Catalyzes the transfer of a GlcNAc subunit on undecaprenyl-pyrophosphoryl-MurNAc-pentapeptide (lipid intermediate I) to form undecaprenyl-pyrophosphoryl-MurNAc-(pentapeptide)GlcNAc (lipid intermediate II). This chain is UDP-N-acetylglucosamine--N-acetylmuramyl-(pentapeptide) pyrophosphoryl-undecaprenol N-acetylglucosamine transferase, found in Synechococcus sp. (strain JA-2-3B'a(2-13)) (Cyanobacteria bacterium Yellowstone B-Prime).